The chain runs to 475 residues: 7-dehydrocholesterol reductase (475 aa).

Positions 1–21 (MAAKSQPNIPKAKSLDGVTND) are disordered. S14 carries the post-translational modification Phosphoserine. 6 helical membrane passes run 40 to 60 (LASV…FIMA), 154 to 174 (THLL…TIIF), 177 to 197 (WIPL…FAMV), 266 to 286 (VTNA…DFFW), 306 to 326 (LGWG…LYLV), and 331 to 351 (QLST…YYIF). Residues K358, R362, L395, W400, and 407-408 (NY) contribute to the NADP(+) site. Residues 420–440 (LACGGGHLLPYFYIIYMAILL) form a helical membrane-spanning segment. NADP(+)-binding positions include D447, 451-455 (CASKY), and Y462.

The protein belongs to the ERG4/ERG24 family. As to quaternary structure, interacts with DHCR24; this interaction regulates DHCR7 activity. Interacts with TMEM147. As to expression, widely expressed. Most abundant in adrenal gland, liver, testis, and brain.

The protein resides in the endoplasmic reticulum membrane. The enzyme catalyses cholesterol + NADP(+) = 7-dehydrocholesterol + NADPH + H(+). It carries out the reaction 7-dehydrodesmosterol + NADPH + H(+) = desmosterol + NADP(+). The catalysed reaction is 5,6alpha-epoxy-5alpha-cholestan-3beta-ol + H2O = 5alpha-cholestane-3beta,5,6beta-triol. It catalyses the reaction 5,6beta-epoxy-5beta-cholestan-3beta-ol + H2O = 5alpha-cholestane-3beta,5,6beta-triol. Its pathway is steroid biosynthesis; cholesterol biosynthesis. With respect to regulation, 7-DHC reductase and cholesterol-5,6-epoxide hydrolase (ChEH) activities are inhibited by tamoxifen and the selective AEBS ligand (4-benzyl-phenoxy)-ethyl-N-pyrrolidine (PBPE). ChEH activity is inhibited by oleic acid. Oxidoreductase that catalyzes the last step of the cholesterol synthesis pathway, which transforms cholesta-5,7-dien-3beta-ol (7-dehydrocholesterol,7-DHC) into cholesterol by reducing the C7-C8 double bond of its sterol core. Can also metabolize cholesta-5,7,24-trien-3beta-ol (7-dehydrodemosterol, 7-DHD) to desmosterol, which is then metabolized by the Delta(24)-sterol reductase (DHCR24) to cholesterol. Modulates ferroptosis (a form of regulated cell death driven by iron-dependent lipid peroxidation) through the metabolic breakdown of the anti-ferroptotic metabolites 7-DHC and 7-DHD which, when accumulated, divert the propagation of peroxyl radical-mediated damage from phospholipid components to its sterol core, protecting plasma and mitochondrial membranes from phospholipid autoxidation. Its function is as follows. Component of the microsomal antiestrogen binding site (AEBS), a multiproteic complex at the ER membrane that consists of an association between cholestenol Delta-isomerase/EBP and DHCR7. This complex is responsible for cholesterol-5,6-epoxide hydrolase (ChEH) activity, which consists in the hydration of cholesterol-5,6-epoxides (5,6-EC) into cholestane-3beta,5alpha,6beta-triol (CT). The precise role of each component of this complex has not been described yet. The protein is 7-dehydrocholesterol reductase of Homo sapiens (Human).